The following is a 100-amino-acid chain: Small ribosomal subunit protein bS20 (100 aa).

The protein belongs to the bacterial ribosomal protein bS20 family.

Binds directly to 16S ribosomal RNA. The polypeptide is Small ribosomal subunit protein bS20 (Prochlorococcus marinus (strain MIT 9211)).